The following is a 239-amino-acid chain: Probable transcriptional regulatory protein Veis_4238 (239 aa).

The interval 1–22 (MAGHSKWANIQHRKGRQDEKRG) is disordered.

Belongs to the TACO1 family.

The protein resides in the cytoplasm. The sequence is that of Probable transcriptional regulatory protein Veis_4238 from Verminephrobacter eiseniae (strain EF01-2).